We begin with the raw amino-acid sequence, 249 residues long: Type III pantothenate kinase (249 aa).

6-13 (DCGNSFIK) is an ATP binding site. Substrate-binding positions include Tyr93 and 100–103 (GLDR). Catalysis depends on Asp102, which acts as the Proton acceptor. Asp122 contacts K(+). Thr125 is a binding site for ATP. Thr181 is a binding site for substrate.

Belongs to the type III pantothenate kinase family. In terms of assembly, homodimer. Requires NH4(+) as cofactor. It depends on K(+) as a cofactor.

It localises to the cytoplasm. The catalysed reaction is (R)-pantothenate + ATP = (R)-4'-phosphopantothenate + ADP + H(+). It functions in the pathway cofactor biosynthesis; coenzyme A biosynthesis; CoA from (R)-pantothenate: step 1/5. Its function is as follows. Catalyzes the phosphorylation of pantothenate (Pan), the first step in CoA biosynthesis. This is Type III pantothenate kinase from Pseudomonas syringae pv. syringae (strain B728a).